The sequence spans 210 residues: Histidine biosynthesis bifunctional protein HisIE (210 aa).

The segment at 1 to 121 is phosphoribosyl-AMP cyclohydrolase; sequence MNPASPFATL…DAQEESQMVW (121 aa). Residues 122 to 210 form a phosphoribosyl-ATP pyrophosphohydrolase region; that stretch reads LHQLEQLLAE…VINKLKERHK (89 aa).

The protein in the N-terminal section; belongs to the PRA-CH family. This sequence in the C-terminal section; belongs to the PRA-PH family.

It localises to the cytoplasm. It carries out the reaction 1-(5-phospho-beta-D-ribosyl)-ATP + H2O = 1-(5-phospho-beta-D-ribosyl)-5'-AMP + diphosphate + H(+). It catalyses the reaction 1-(5-phospho-beta-D-ribosyl)-5'-AMP + H2O = 1-(5-phospho-beta-D-ribosyl)-5-[(5-phospho-beta-D-ribosylamino)methylideneamino]imidazole-4-carboxamide. It functions in the pathway amino-acid biosynthesis; L-histidine biosynthesis; L-histidine from 5-phospho-alpha-D-ribose 1-diphosphate: step 2/9. The protein operates within amino-acid biosynthesis; L-histidine biosynthesis; L-histidine from 5-phospho-alpha-D-ribose 1-diphosphate: step 3/9. The protein is Histidine biosynthesis bifunctional protein HisIE (hisI) of Vibrio cholerae serotype O1 (strain ATCC 39315 / El Tor Inaba N16961).